A 130-amino-acid polypeptide reads, in one-letter code: Small ribosomal subunit protein uS8 (130 aa).

Belongs to the universal ribosomal protein uS8 family. In terms of assembly, part of the 30S ribosomal subunit. Contacts proteins S5 and S12.

Its function is as follows. One of the primary rRNA binding proteins, it binds directly to 16S rRNA central domain where it helps coordinate assembly of the platform of the 30S subunit. This Shigella boydii serotype 18 (strain CDC 3083-94 / BS512) protein is Small ribosomal subunit protein uS8.